We begin with the raw amino-acid sequence, 643 residues long: Nucleolar GTP-binding protein 1 (643 aa).

Residues 168–340 form the OBG-type G domain; sequence RTLLICGYPN…VRNKACEKLL (173 aa). Residues 174–181, 220–224, and 288–291 each bind GTP; these read GYPNVGKS, DTPGI, and NKTD. The disordered stretch occupies residues 568 to 643; the sequence is GDQEDSAPAG…KRGVGKTDFR (76 aa). The span at 594–622 shows a compositional bias: basic and acidic residues; it reads MRSKAERMAKLERRERNRMARAGESDRHA.

Belongs to the TRAFAC class OBG-HflX-like GTPase superfamily. OBG GTPase family. NOG subfamily.

It is found in the nucleus. It localises to the nucleolus. Functionally, involved in the biogenesis of the 60S ribosomal subunit. The sequence is that of Nucleolar GTP-binding protein 1 (NOG1) from Kluyveromyces lactis (strain ATCC 8585 / CBS 2359 / DSM 70799 / NBRC 1267 / NRRL Y-1140 / WM37) (Yeast).